The primary structure comprises 170 residues: Cytidine diphosphoramidate kinase (170 aa).

This sequence belongs to the APS kinase family.

It catalyses the reaction cytidine 5'-diphosphoramidate + ATP = cytidine 3'-phospho-5'-diphosphoramidate + ADP + H(+). The protein operates within capsule biogenesis; capsule polysaccharide biosynthesis. Its function is as follows. Involved in the biosynthesis of the O-methyl phosphoramidate (MeOPN) group found on the capsular polysaccharide (CPS) of C.jejuni. Catalyzes the ATP-dependent phosphorylation of cytidine diphosphoramidate (CDP-NH(2)) to form cytidine 3'-phosphate 5'-diphosphoramidate. Can also use other substrates such as the corresponding adenine and uridine diphosphoramidate derivatives or cytidine diphosphoramidate analogs, with lower efficiency. The protein is Cytidine diphosphoramidate kinase of Campylobacter jejuni subsp. jejuni serotype O:2 (strain ATCC 700819 / NCTC 11168).